The chain runs to 436 residues: WD repeat domain phosphoinositide-interacting protein 2 (436 aa).

The WD 1 repeat unit spans residues 182-222; it reads AHDSPLAALAFDASGTKLATASEKGTVIRVFSIPEGQKLFE. The L/FRRG motif motif lies at 223–226; sequence FRRG. 2 WD repeats span residues 228–267 and 311–349; these read KRCVSICSLAFSMDGMFLSASSNTETVHIFKLETVKEKPQ and GHKNICALATIQKIPRLLVGAADGYLYMYNLDPQEGGEC.

The protein belongs to the WD repeat PROPPIN family.

It is found in the preautophagosomal structure membrane. Functionally, component of the autophagy machinery that controls the major intracellular degradation process by which cytoplasmic materials are packaged into autophagosomes and delivered to lysosomes for degradation. Involved in an early step of the formation of preautophagosomal structures. The chain is WD repeat domain phosphoinositide-interacting protein 2 (WIPI2) from Gallus gallus (Chicken).